Here is a 388-residue protein sequence, read N- to C-terminus: MGLNHLTLVCSAIALLSIFVVSQAGVTSTHVRVSEPSEEMPLETFPPPACYNAPEQVHITQGDHAGRGMIISWVTPLNEDGSNVVTYWIANSDGSDNKSALATTSSYRYFNYTSGYLYHATIKGLETLYNYMSNPKGQAVLFAGDLSYADDHPNHDQRKWDSYGRFVEPSAAYQPWIWAAGNHEIDYAESIPHKVHLHFGTKSNELQLTSSYSPLTQLMDELKKVNRSETPWLIVLVHAPWYNSNNYHYMEGESMRVTFEPWFVENKVDIVFAGHVHAYERSERISNIQYNITDGMSTPVKDQNAPVYITIGDGGNIEGIANNFIDPQPSYSAFREASFGHAILEIKNRTHAHYTWHRNKEDEFIPEAVIADSIWLKNRYYLREEETS.

A signal peptide spans 1 to 24 (MGLNHLTLVCSAIALLSIFVVSQA). N-linked (GlcNAc...) asparagine glycans are attached at residues Asn-97 and Asn-111. Fe cation-binding residues include Asp-145 and Tyr-148. Zn(2+) is bound at residue Asp-145. Asn-182 is a binding site for Zn(2+). Position 182 (Asn-182) interacts with substrate. Asn-226 carries N-linked (GlcNAc...) asparagine glycosylation. His-238 contacts Zn(2+). The Proton donor role is filled by His-248. His-275 serves as a coordination point for Zn(2+). 275-277 (HVH) lines the substrate pocket. His-277 contacts Fe cation. Residues Asn-291 and Asn-348 are each glycosylated (N-linked (GlcNAc...) asparagine).

This sequence belongs to the metallophosphoesterase superfamily. Purple acid phosphatase family. In terms of assembly, homodimer. Fe cation is required as a cofactor. The cofactor is Zn(2+). Specifically expressed in flowers.

The protein resides in the secreted. It carries out the reaction a phosphate monoester + H2O = an alcohol + phosphate. The protein is Purple acid phosphatase 19 (PAP19) of Arabidopsis thaliana (Mouse-ear cress).